Here is a 384-residue protein sequence, read N- to C-terminus: Aryl-alcohol dehydrogenase GME11368 (384 aa).

Residue Asp69 participates in NADP(+) binding. Tyr74 functions as the Proton donor in the catalytic mechanism. Residues 177–178 (SD), Gln203, and 301–309 (RKPEHLKAN) each bind NADP(+).

It belongs to the aldo/keto reductase family. Aldo/keto reductase 2 subfamily.

It participates in secondary metabolite biosynthesis. In terms of biological role, aryl-alcohol dehydrogenase; part of the gene cluster that mediates the biosynthesis of dibenzodioxocinones such as pestalotiollide B, a novel class of inhibitors against cholesterol ester transfer protein (CEPT). The biosynthesis initiates from condensation of acetate and malonate units catalyzed by the non-reducing PKS pks8/GME11356. Pks8/GME11356 lacks a thioesterase (TE) domain, which is important to the cyclizing of the third ring of atrochrysone carboxylic acid, and the esterase GME11355 might play the role of TE and catalyzes the cyclization reaction of the C ring. The lactamase-like protein GME11357 (or other beta-lactamases in Pestalotiopsis microspora) probably hydrolyzes the thioester bond between the ACP of pks8/GME11356 and the intermediate to release atrochrysone carboxylic acid, which is spontaneously dehydrates to form endocrocin anthrone. Endocrocin anthrone is further converted to emodin via the endocrocin intermediate. Emodin is then oxidized by several enzymes such as the Baeyer-Villiger oxidase GME11358, the oxidoreductase GME11367, the short chain dehydrogenase/reductase GME11373, as well as by other oxidoreductases from the cluster, to modify the A and C rings and open the B ring, and finally yield monodictyphenone. The prenyltransferase GME11375 may catalyze the addition reaction between the C5 side chains and the carbon bone of dibenzodioxocinones. The remaining biochemical reactions to the final product dibenzodioxocinones should be methylation catalyzed by methyltransferase GME11366 and reduction and lactonization reaction catalyzed by a series of oxidordeuctases. The sequence is that of Aryl-alcohol dehydrogenase GME11368 from Pestalotiopsis microspora.